The following is a 615-amino-acid chain: Zinc metalloproteinase-disintegrin-like (615 aa).

A signal peptide spans 1-20 (MIQALLVTICLVGFPHQGSS). Positions 21 to 195 (IILESGNVKD…KMNFQSANNP (175 aa)) are excised as a propeptide. Residues 204-400 (KYIKLAVVVD…DLPQCILNKP (197 aa)) form the Peptidase M12B domain. Disulfide bonds link C315–C395, C355–C379, and C357–C362. Position 340 (H340) interacts with Zn(2+). E341 is a catalytic residue. Positions 344 and 350 each coordinate Zn(2+). Residues 408–494 (PAVCGNNFVE…DCPMDGLQRN (87 aa)) enclose the Disintegrin domain. Ca(2+) is bound by residues V410, N413, F415, E417, and D423. Cystine bridges form between C411/C440, C422/C435, C424/C430, C434/C457, C448/C454, C453/C479, C466/C486, C473/C505, C498/C510, C517/C567, C532/C576, C545/C555, C562/C602, and C596/C608. Residues 472-474 (DCD) carry the D/ECD-tripeptide motif.

This sequence belongs to the venom metalloproteinase (M12B) family. P-III subfamily. P-IIIa sub-subfamily. Monomer. It depends on Zn(2+) as a cofactor. In terms of tissue distribution, expressed by the venom gland.

The protein resides in the secreted. Snake venom zinc metalloprotease that may induce platelet aggregation. This is Zinc metalloproteinase-disintegrin-like from Cerberus rynchops (Dog-faced water snake).